The sequence spans 202 residues: Elongation factor Ts, chloroplastic (202 aa).

This sequence belongs to the EF-Ts family.

It localises to the plastid. Its subcellular location is the chloroplast. Associates with the EF-Tu.GDP complex and induces the exchange of GDP to GTP. It remains bound to the aminoacyl-tRNA.EF-Tu.GTP complex up to the GTP hydrolysis stage on the ribosome. The polypeptide is Elongation factor Ts, chloroplastic (tsf) (Phaeodactylum tricornutum (strain CCAP 1055/1)).